A 344-amino-acid polypeptide reads, in one-letter code: tRNA dimethylallyltransferase (344 aa).

19–26 is a binding site for ATP; that stretch reads GPTASGKT. Residue 21–26 coordinates substrate; that stretch reads TASGKT.

It belongs to the IPP transferase family. Monomer. Mg(2+) is required as a cofactor.

The enzyme catalyses adenosine(37) in tRNA + dimethylallyl diphosphate = N(6)-dimethylallyladenosine(37) in tRNA + diphosphate. In terms of biological role, catalyzes the transfer of a dimethylallyl group onto the adenine at position 37 in tRNAs that read codons beginning with uridine, leading to the formation of N6-(dimethylallyl)adenosine (i(6)A). The polypeptide is tRNA dimethylallyltransferase (Bifidobacterium animalis subsp. lactis (strain AD011)).